The following is a 451-amino-acid chain: Phosphoglucosamine mutase (451 aa).

Residue serine 101 is the Phosphoserine intermediate of the active site. Positions 101, 243, 245, and 247 each coordinate Mg(2+). Phosphoserine is present on serine 101.

The protein belongs to the phosphohexose mutase family. The cofactor is Mg(2+). Activated by phosphorylation.

The enzyme catalyses alpha-D-glucosamine 1-phosphate = D-glucosamine 6-phosphate. In terms of biological role, catalyzes the conversion of glucosamine-6-phosphate to glucosamine-1-phosphate. In Thermodesulfovibrio yellowstonii (strain ATCC 51303 / DSM 11347 / YP87), this protein is Phosphoglucosamine mutase.